The primary structure comprises 1013 residues: Adhesion G-protein coupled receptor G2 (1013 aa).

The first 37 residues, 1 to 37 (MLFSGGQYSPVGRPEEVLLIYKIFLVIICFHAILVTS), serve as a signal peptide directing secretion. The Extracellular segment spans residues 38–623 (LKENAGNSSL…TSLPPSQMMA (586 aa)). N-linked (GlcNAc...) asparagine glycans are attached at residues asparagine 44, asparagine 78, asparagine 92, asparagine 104, asparagine 128, asparagine 137, asparagine 155, asparagine 179, asparagine 187, asparagine 366, asparagine 431, asparagine 452, asparagine 457, asparagine 524, asparagine 538, asparagine 543, asparagine 547, and asparagine 593. One can recognise a GAIN-B domain in the interval 457–615 (NTTTFAAQDP…GILLDLSRTS (159 aa)). Cystine bridges form between cysteine 566/cysteine 597 and cysteine 585/cysteine 599. The interval 566-615 (CVFWDLNRNGGRGGWSSDGCSVKEKRMNETICTCSHLTSFGILLDLSRTS) is GPS. Positions 604-615 (SFGILLDLSRTS) are stachel. A helical transmembrane segment spans residues 624–644 (LTFITYIGCGLSSIFLSVTLV). The Cytoplasmic segment spans residues 645–663 (TYIAFEKIRRDYPSKILIQ). A helical transmembrane segment spans residues 664-684 (LCAALLLLNLVFLLDSWIALY). The Extracellular portion of the chain corresponds to 685–688 (NARG). A helical membrane pass occupies residues 689-709 (FCISVAVFLHYFLLVSFTWMG). A disulfide bridge connects residues cysteine 690 and cysteine 774. Residues 710-733 (LEAFHMYLALVKVFNTYIRKYILK) lie on the Cytoplasmic side of the membrane. A helical membrane pass occupies residues 734 to 754 (FCIVGWGIPAVVVSIVLTISP). Residues 755-785 (DNYGIGSYGKFPNGTPDDFCWINSSVVFYIT) lie on the Extracellular side of the membrane. Residue asparagine 777 is glycosylated (N-linked (GlcNAc...) asparagine). Residues 786 to 806 (VVGYFCVIFLLNVSMFIVVLV) traverse the membrane as a helical segment. Residues 807 to 830 (QLCRIKKKKQLGAQRKTSIQDLRS) lie on the Cytoplasmic side of the membrane. The chain crosses the membrane as a helical span at residues 831–851 (IAGLTFLLGITWGFAFFAWGP). At 852–853 (VN) the chain is on the extracellular side. Asparagine 853 carries N-linked (GlcNAc...) asparagine glycosylation. Residues 854 to 874 (LTFMYLFAIFNTLQGFFIFIF) form a helical membrane-spanning segment. 3beta-hydroxyandrost-5-en-17-one is bound at residue asparagine 864. Residues 875-1013 (YCAAKENVRK…RGSLHFIEQM (139 aa)) are Cytoplasmic-facing. Position 1006 is a phosphoserine (serine 1006).

Belongs to the G-protein coupled receptor 2 family. Adhesion G-protein coupled receptor (ADGR) subfamily. Heterodimer of 2 chains generated by proteolytic processing; the large extracellular N-terminal fragment and the membrane-bound C-terminal fragment predominantly remain associated and non-covalently linked. Interacts with CFTR. In terms of processing, proteolytically cleaved into 2 subunits, an extracellular subunit and a seven-transmembrane subunit. Highly glycosylated. In terms of tissue distribution, epididymis-specific expression (at protein level). Associated with apical membranes of efferent ductule and proximal epididymal duct epithelia.

The protein resides in the apical cell membrane. Forms a heterodimer of 2 chains generated by proteolytic processing that remain associated through non-covalent interactions mediated by the GAIN-B domain. In the inactivated receptor, the Stachel sequence (also named stalk) is embedded in the GAIN-B domain, where it adopts a beta-strand conformation. On activation, the Stachel moves into the 7 transmembrane region and adopts a twisted hook-shaped configuration that forms contacts within the receptor, leading to coupling of a G-alpha protein, which activates signaling. The cleaved GAIN-B and N-terminal domains can then dissociate from the rest of the receptor. Deoxycorticosterone (DOC) acts as an antagonist of ADGRG2. Functionally, adhesion G-protein coupled receptor (aGPCR) for steroid hormones, such as dehydroepiandrosterone (DHEA; also named 3beta-hydroxyandrost-5-en-17-one) and androstenedione. Involved in a signal transduction pathway controlling epididymal function and male fertility. Ligand binding causes a conformation change that triggers signaling via guanine nucleotide-binding proteins (G proteins) and modulates the activity of downstream effectors, such as adenylate cyclase. ADGRG2 is coupled to G(s) G proteins and mediates activation of adenylate cyclase activity. Also able to couple with G(q) G proteins in vitro. May regulate fluid exchange within epididymis. The polypeptide is Adhesion G-protein coupled receptor G2 (Rattus norvegicus (Rat)).